The chain runs to 197 residues: Fucoxanthin-chlorophyll a-c binding protein E, chloroplastic (197 aa).

Residues Met1–Met31 constitute a chloroplast transit peptide. The next 3 membrane-spanning stretches (helical) occupy residues Ile73–Ile94, Ile114–Met134, and Gly174–Pro196.

This sequence belongs to the fucoxanthin chlorophyll protein family. In terms of assembly, the LHC complex of chromophytic algae is composed of fucoxanthin, chlorophyll A and C bound non-covalently by fucoxanthin chlorophyll proteins (FCPs). The ratio of the pigments in LHC; fucoxanthin: chlorophyll C: chlorophyll A; (0.6-1): (0.1-0.3): (1).

It is found in the plastid. Its subcellular location is the chloroplast thylakoid membrane. The light-harvesting complex (LHC) functions as a light receptor, it captures and delivers excitation energy to photosystems with which it is closely associated. Energy is transferred from the carotenoid and chlorophyll C (or B) to chlorophyll A and the photosynthetic reaction centers where it is used to synthesize ATP and reducing power. In Phaeodactylum tricornutum (Diatom), this protein is Fucoxanthin-chlorophyll a-c binding protein E, chloroplastic (FCPE).